The following is a 183-amino-acid chain: ATP synthase subunit b, chloroplastic (183 aa).

Residues 25-45 (DILATNLINLTVVVGVLIFFG) traverse the membrane as a helical segment.

This sequence belongs to the ATPase B chain family. As to quaternary structure, F-type ATPases have 2 components, F(1) - the catalytic core - and F(0) - the membrane proton channel. F(1) has five subunits: alpha(3), beta(3), gamma(1), delta(1), epsilon(1). F(0) has four main subunits: a(1), b(1), b'(1) and c(10-14). The alpha and beta chains form an alternating ring which encloses part of the gamma chain. F(1) is attached to F(0) by a central stalk formed by the gamma and epsilon chains, while a peripheral stalk is formed by the delta, b and b' chains.

It localises to the plastid. It is found in the chloroplast thylakoid membrane. Functionally, f(1)F(0) ATP synthase produces ATP from ADP in the presence of a proton or sodium gradient. F-type ATPases consist of two structural domains, F(1) containing the extramembraneous catalytic core and F(0) containing the membrane proton channel, linked together by a central stalk and a peripheral stalk. During catalysis, ATP synthesis in the catalytic domain of F(1) is coupled via a rotary mechanism of the central stalk subunits to proton translocation. In terms of biological role, component of the F(0) channel, it forms part of the peripheral stalk, linking F(1) to F(0). The polypeptide is ATP synthase subunit b, chloroplastic (Zea mays (Maize)).